A 516-amino-acid polypeptide reads, in one-letter code: Maintenance of mitochondrial morphology protein 1 (516 aa).

At Met1–Gly43 the chain is on the lumenal side. Residues Leu44–Phe64 form a helical membrane-spanning segment. Over Gly65–Thr516 the chain is Cytoplasmic. 4 disordered regions span residues Pro70–Thr118, Thr295–Gly349, Arg420–Gly466, and Gly485–Thr516. 3 stretches are compositionally biased toward polar residues: residues Gly74–Ser96, Ser105–Thr118, and Thr295–Glu312. Residues Gln151 to Pro412 form the SMP-LTD domain. The span at Gly449–Met460 shows a compositional bias: gly residues.

This sequence belongs to the MMM1 family. As to quaternary structure, homodimer. Component of the ER-mitochondria encounter structure (ERMES) or MDM complex, composed of MMM1, MDM10, MDM12 and MDM34. An MMM1 homodimer associates with one molecule of MDM12 on each side in a pairwise head-to-tail manner, and the SMP-LTD domains of MMM1 and MDM12 generate a continuous hydrophobic tunnel for phospholipid trafficking.

It localises to the endoplasmic reticulum membrane. Component of the ERMES/MDM complex, which serves as a molecular tether to connect the endoplasmic reticulum (ER) and mitochondria. Components of this complex are involved in the control of mitochondrial shape and protein biogenesis, and function in nonvesicular lipid trafficking between the ER and mitochondria. The MDM12-MMM1 subcomplex functions in the major beta-barrel assembly pathway that is responsible for biogenesis of all outer membrane beta-barrel proteins, and acts in a late step after the SAM complex. The MDM10-MDM12-MMM1 subcomplex further acts in the TOM40-specific pathway after the action of the MDM12-MMM1 complex. Essential for establishing and maintaining the structure of mitochondria and maintenance of mtDNA nucleoids. The protein is Maintenance of mitochondrial morphology protein 1 of Paracoccidioides brasiliensis (strain Pb18).